An 843-amino-acid polypeptide reads, in one-letter code: Protein P (843 aa).

Residues 1 to 177 (MPLSYQHFRK…FCGSPYSWEQ (177 aa)) form a terminal protein domain (TP) region. Positions 178–346 (DLQHGRLVFQ…YCLSHIVNLI (169 aa)) are spacer. Disordered regions lie at residues 219 to 249 (RKSR…RIHP) and 290 to 316 (STSK…RSQS). Positions 290-299 (STSKGHSSSG) are enriched in polar residues. The segment at 347 to 690 (EDWGPCAEHG…YMTLYPVARQ (344 aa)) is polymerase/reverse transcriptase domain (RT). Residues 357–600 (EHRIRTPRTP…YSLNFMGYVI (244 aa)) enclose the Reverse transcriptase domain. Mg(2+)-binding residues include Asp429, Asp551, and Asp552.

The protein belongs to the hepadnaviridae P protein family.

It carries out the reaction DNA(n) + a 2'-deoxyribonucleoside 5'-triphosphate = DNA(n+1) + diphosphate. It catalyses the reaction Endonucleolytic cleavage to 5'-phosphomonoester.. Activated by host HSP70 and HSP40 in vitro to be able to bind the epsilon loop of the pgRNA. Because deletion of the RNase H region renders the protein partly chaperone-independent, the chaperones may be needed indirectly to relieve occlusion of the RNA-binding site by this domain. Inhibited by several reverse-transcriptase inhibitors: Lamivudine, Adefovir and Entecavir. Functionally, multifunctional enzyme that converts the viral RNA genome into dsDNA in viral cytoplasmic capsids. This enzyme displays a DNA polymerase activity that can copy either DNA or RNA templates, and a ribonuclease H (RNase H) activity that cleaves the RNA strand of RNA-DNA heteroduplexes in a partially processive 3'- to 5'-endonucleasic mode. Neo-synthesized pregenomic RNA (pgRNA) are encapsidated together with the P protein, and reverse-transcribed inside the nucleocapsid. Initiation of reverse-transcription occurs first by binding the epsilon loop on the pgRNA genome, and is initiated by protein priming, thereby the 5'-end of (-)DNA is covalently linked to P protein. Partial (+)DNA is synthesized from the (-)DNA template and generates the relaxed circular DNA (RC-DNA) genome. After budding and infection, the RC-DNA migrates in the nucleus, and is converted into a plasmid-like covalently closed circular DNA (cccDNA). The activity of P protein does not seem to be necessary for cccDNA generation, and is presumably released from (+)DNA by host nuclear DNA repair machinery. This is Protein P from Homo sapiens (Human).